A 502-amino-acid polypeptide reads, in one-letter code: Probable cytosol aminopeptidase (502 aa).

Residues Lys-265 and Asp-270 each contribute to the Mn(2+) site. Residue Lys-277 is part of the active site. Mn(2+) contacts are provided by Asp-288, Asp-347, and Glu-349. Residue Arg-351 is part of the active site.

The protein belongs to the peptidase M17 family. The cofactor is Mn(2+).

The protein resides in the cytoplasm. It catalyses the reaction Release of an N-terminal amino acid, Xaa-|-Yaa-, in which Xaa is preferably Leu, but may be other amino acids including Pro although not Arg or Lys, and Yaa may be Pro. Amino acid amides and methyl esters are also readily hydrolyzed, but rates on arylamides are exceedingly low.. The catalysed reaction is Release of an N-terminal amino acid, preferentially leucine, but not glutamic or aspartic acids.. In terms of biological role, presumably involved in the processing and regular turnover of intracellular proteins. Catalyzes the removal of unsubstituted N-terminal amino acids from various peptides. The polypeptide is Probable cytosol aminopeptidase (Rickettsia bellii (strain RML369-C)).